The primary structure comprises 201 residues: MNETNDNDIDQLIYLFSKLPGLGIRSARRIALYLLQDKDIRLKSLINNLVEIDKKIVKCEICGNMDTENMCRICSSEYRDKSIIAIVETVAELWAMERSGNFKGLYHVLGHNLSATSRQNPSILRLPELLTRCFAENIKEVIIATNSTLEGQTTAYFITEYLKEHPAKISRLASGIPIGGELDYLDEGTVSAAINLRQPFE.

The C4-type zinc finger occupies 59 to 74; it reads CEICGNMDTENMCRIC. Positions 82 to 177 constitute a Toprim domain; sequence SIIAIVETVA…KISRLASGIP (96 aa).

It belongs to the RecR family.

In terms of biological role, may play a role in DNA repair. It seems to be involved in an RecBC-independent recombinational process of DNA repair. It may act with RecF and RecO. This Rickettsia conorii (strain ATCC VR-613 / Malish 7) protein is Recombination protein RecR.